The sequence spans 976 residues: Probable alanine--tRNA ligase, chloroplastic/mitochondrial (976 aa).

Residues 1–54 (MPRPGFAHATAPALAHARARISPVARRRVVVMRTRVDGAAKSLVTQLRLALGST) constitute a chloroplast and mitochondrion transit peptide. The disordered stretch occupies residues 71 to 95 (LGTATNDQSTGTRANPNAEGKDNSG). Polar residues predominate over residues 73–85 (TATNDQSTGTRAN).

Belongs to the class-II aminoacyl-tRNA synthetase family. As to quaternary structure, monomer. The cofactor is Zn(2+).

It localises to the plastid. The protein localises to the chloroplast. Its subcellular location is the mitochondrion. It carries out the reaction tRNA(Ala) + L-alanine + ATP = L-alanyl-tRNA(Ala) + AMP + diphosphate. Functionally, catalyzes the attachment of alanine to tRNA(Ala) in a two-step reaction: alanine is first activated by ATP to form Ala-AMP and then transferred to the acceptor end of tRNA(Ala). Also edits incorrectly charged tRNA(Ala) via its editing domain. The chain is Probable alanine--tRNA ligase, chloroplastic/mitochondrial from Ostreococcus tauri.